The primary structure comprises 570 residues: Dihydroxy-acid dehydratase 2 (570 aa).

Residue Cys51 coordinates [2Fe-2S] cluster. Residue Asp83 coordinates Mg(2+). Cys124 serves as a coordination point for [2Fe-2S] cluster. Asp125 and Lys126 together coordinate Mg(2+). Residue Lys126 is modified to N6-carboxylysine. Cys196 lines the [2Fe-2S] cluster pocket. Glu446 contributes to the Mg(2+) binding site. Catalysis depends on Ser472, which acts as the Proton acceptor.

This sequence belongs to the IlvD/Edd family. Homodimer. [2Fe-2S] cluster serves as cofactor. It depends on Mg(2+) as a cofactor.

The enzyme catalyses (2R)-2,3-dihydroxy-3-methylbutanoate = 3-methyl-2-oxobutanoate + H2O. It catalyses the reaction (2R,3R)-2,3-dihydroxy-3-methylpentanoate = (S)-3-methyl-2-oxopentanoate + H2O. It participates in amino-acid biosynthesis; L-isoleucine biosynthesis; L-isoleucine from 2-oxobutanoate: step 3/4. It functions in the pathway amino-acid biosynthesis; L-valine biosynthesis; L-valine from pyruvate: step 3/4. Functions in the biosynthesis of branched-chain amino acids. Catalyzes the dehydration of (2R,3R)-2,3-dihydroxy-3-methylpentanoate (2,3-dihydroxy-3-methylvalerate) into 2-oxo-3-methylpentanoate (2-oxo-3-methylvalerate) and of (2R)-2,3-dihydroxy-3-methylbutanoate (2,3-dihydroxyisovalerate) into 2-oxo-3-methylbutanoate (2-oxoisovalerate), the penultimate precursor to L-isoleucine and L-valine, respectively. The polypeptide is Dihydroxy-acid dehydratase 2 (Bordetella bronchiseptica (strain ATCC BAA-588 / NCTC 13252 / RB50) (Alcaligenes bronchisepticus)).